We begin with the raw amino-acid sequence, 515 residues long: 2-isopropylmalate synthase (515 aa).

One can recognise a Pyruvate carboxyltransferase domain in the interval Ile4 to Lys266. Positions 13, 201, 203, and 237 each coordinate Mn(2+). Positions Glu391–Val515 are regulatory domain.

Belongs to the alpha-IPM synthase/homocitrate synthase family. LeuA type 1 subfamily. As to quaternary structure, homodimer. The cofactor is Mn(2+).

It is found in the cytoplasm. It catalyses the reaction 3-methyl-2-oxobutanoate + acetyl-CoA + H2O = (2S)-2-isopropylmalate + CoA + H(+). It functions in the pathway amino-acid biosynthesis; L-leucine biosynthesis; L-leucine from 3-methyl-2-oxobutanoate: step 1/4. Functionally, catalyzes the condensation of the acetyl group of acetyl-CoA with 3-methyl-2-oxobutanoate (2-ketoisovalerate) to form 3-carboxy-3-hydroxy-4-methylpentanoate (2-isopropylmalate). This Halalkalibacterium halodurans (strain ATCC BAA-125 / DSM 18197 / FERM 7344 / JCM 9153 / C-125) (Bacillus halodurans) protein is 2-isopropylmalate synthase.